Reading from the N-terminus, the 396-residue chain is Tyrosine--tRNA ligase (396 aa).

The short motif at 43–52 (PSSPDIHLGH) is the 'HIGH' region element. The 'KMSKS' region motif lies at 227-231 (KMSKS). Lysine 230 lines the ATP pocket. An S4 RNA-binding domain is found at 338-396 (ICVIDFIIKADLAKSKSEARRLLEQGGVEINSAKISDPGTTVKCGDIIKAGKRRYSKAV).

Belongs to the class-I aminoacyl-tRNA synthetase family. TyrS type 2 subfamily. As to quaternary structure, homodimer.

The protein localises to the cytoplasm. The enzyme catalyses tRNA(Tyr) + L-tyrosine + ATP = L-tyrosyl-tRNA(Tyr) + AMP + diphosphate + H(+). Catalyzes the attachment of tyrosine to tRNA(Tyr) in a two-step reaction: tyrosine is first activated by ATP to form Tyr-AMP and then transferred to the acceptor end of tRNA(Tyr). In Dehalococcoides mccartyi (strain ATCC BAA-2266 / KCTC 15142 / 195) (Dehalococcoides ethenogenes (strain 195)), this protein is Tyrosine--tRNA ligase.